Reading from the N-terminus, the 285-residue chain is HTH-type transcriptional regulator MurR (285 aa).

The HTH rpiR-type domain maps to 1–77 (MLYLTKIRNA…MALIGEYSAS (77 aa)). Positions 37 to 56 (SRKMAKQLGISQSSIVKFAQ) form a DNA-binding region, H-T-H motif. An SIS domain is found at 128–268 (IIEVISKAPF…FVGLVQLNDV (141 aa)).

Homotetramer.

Its pathway is amino-sugar metabolism; N-acetylmuramate degradation [regulation]. Its function is as follows. Represses the expression of the murPQ operon involved in the uptake and degradation of N-acetylmuramic acid (MurNAc). Binds to two adjacent inverted repeats within the operator region. MurNAc 6-phosphate, the substrate of MurQ, is the specific inducer that weakens binding of MurR to the operator. The chain is HTH-type transcriptional regulator MurR from Escherichia coli O7:K1 (strain IAI39 / ExPEC).